An 85-amino-acid polypeptide reads, in one-letter code: Beta-insect depressant toxin Lqh-dprIT3f (85 aa).

Positions 1-21 (MKLLLLLTISASMLIEGLVNA) are cleaved as a signal peptide. The region spanning 22–82 (DGYIRGGDGC…EWDYETDTCG (61 aa)) is the LCN-type CS-alpha/beta domain. Disulfide bonds link Cys-31-Cys-81, Cys-35-Cys-56, Cys-42-Cys-63, and Cys-46-Cys-65. Gly-82 bears the Glycine amide mark.

It belongs to the long (4 C-C) scorpion toxin superfamily. Sodium channel inhibitor family. Beta subfamily. Expressed by the venom gland.

It is found in the secreted. In terms of biological role, depressant insect beta-toxins cause a transient contraction paralysis followed by a slow flaccid paralysis. They bind voltage-independently at site-4 of sodium channels (Nav) and block action potentials, primarily by depolarizing the axonal membrane and suppressing the sodium current. This depressant toxin is active only on insects. It is found in a relatively small amount in the venom. This Leiurus hebraeus (Hebrew deathstalker scorpion) protein is Beta-insect depressant toxin Lqh-dprIT3f.